A 346-amino-acid polypeptide reads, in one-letter code: N-acetyl-gamma-glutamyl-phosphate reductase (346 aa).

The active site involves Cys-149.

This sequence belongs to the NAGSA dehydrogenase family. Type 1 subfamily.

The protein localises to the cytoplasm. It catalyses the reaction N-acetyl-L-glutamate 5-semialdehyde + phosphate + NADP(+) = N-acetyl-L-glutamyl 5-phosphate + NADPH + H(+). Its pathway is amino-acid biosynthesis; L-arginine biosynthesis; N(2)-acetyl-L-ornithine from L-glutamate: step 3/4. Functionally, catalyzes the NADPH-dependent reduction of N-acetyl-5-glutamyl phosphate to yield N-acetyl-L-glutamate 5-semialdehyde. This Pelobacter propionicus (strain DSM 2379 / NBRC 103807 / OttBd1) protein is N-acetyl-gamma-glutamyl-phosphate reductase.